A 268-amino-acid chain; its full sequence is Nickel import ATP-binding protein NikE (268 aa).

The region spanning 4 to 252 (LNVCGLSHHY…SSDAGRVLQN (249 aa)) is the ABC transporter domain. Residue 45–52 (GRSGCGKS) coordinates ATP.

The protein belongs to the ABC transporter superfamily. Nickel importer (TC 3.A.1.5.3) family. As to quaternary structure, the complex is composed of two ATP-binding proteins (NikD and NikE), two transmembrane proteins (NikB and NikC) and a solute-binding protein (NikA).

It localises to the cell inner membrane. The enzyme catalyses Ni(2+)(out) + ATP + H2O = Ni(2+)(in) + ADP + phosphate + H(+). Functionally, part of the ABC transporter complex NikABCDE involved in nickel import. Responsible for energy coupling to the transport system. The sequence is that of Nickel import ATP-binding protein NikE from Shigella flexneri.